Reading from the N-terminus, the 174-residue chain is Gamma-crystallin C (174 aa).

Beta/gamma crystallin 'Greek key' domains lie at Gly2–Ser40 and Gly41–Pro83. Residue Cys23 is modified to S-methylcysteine. The interval Gln84–Ser87 is connecting peptide. 2 Beta/gamma crystallin 'Greek key' domains span residues His88–Glu128 and Gly129–Val171.

This sequence belongs to the beta/gamma-crystallin family. As to quaternary structure, monomer.

In terms of biological role, crystallins are the dominant structural components of the vertebrate eye lens. This Homo sapiens (Human) protein is Gamma-crystallin C (CRYGC).